A 500-amino-acid polypeptide reads, in one-letter code: Endonuclease domain-containing 1 protein (500 aa).

A signal peptide spans M1–G21. The segment at E293–G323 is disordered. Over residues Q297 to P317 the composition is skewed to low complexity. K407 is subject to N6-acetyllysine.

It belongs to the DNA/RNA non-specific endonuclease family. In terms of assembly, interacts with RNF26; this interaction is important to modulate innate immune signaling through the cGAS-STING pathway.

Its subcellular location is the secreted. In terms of biological role, may act as a DNase and a RNase. Plays a role in the modulation of innate immune signaling through the cGAS-STING pathway by interacting with RNF26. The polypeptide is Endonuclease domain-containing 1 protein (ENDOD1) (Homo sapiens (Human)).